The primary structure comprises 362 residues: Heat-inducible transcription repressor HrcA (362 aa).

The protein belongs to the HrcA family.

In terms of biological role, negative regulator of class I heat shock genes (grpE-dnaK-dnaJ and groELS operons). Prevents heat-shock induction of these operons. In Rhizobium leguminosarum bv. trifolii (strain WSM2304), this protein is Heat-inducible transcription repressor HrcA.